We begin with the raw amino-acid sequence, 1344 residues long: Period circadian protein homolog 2 (1344 aa).

Disordered stretches follow at residues 1-21 (MDCI…PEQQ) and 42-112 (EYSG…NGKD). A compositionally biased stretch (polar residues) spans 10–21 (YSSTEEQNPEQQ). The span at 78–89 (SSGSSGNDFSGN) shows a compositional bias: low complexity. Basic and acidic residues predominate over residues 99–111 (HDSHGHESDENGK). The Nuclear export signal 1 signature appears at 161-170 (LLKTLQELKA). The PAS 1 domain occupies 231–298 (ITSEYIMKNA…FYTSTTPYRL (68 aa)). The LXXLL signature appears at 358–362 (LCCVL). The 67-residue stretch at 371–437 (YEAPRIPPDK…MLAIHKKILQ (67 aa)) folds into the PAS 2 domain. Residues 445–488 (YSPIRFCTRNGDYITMDTSWSSFINPWSRKVSFIIGRHKVRTGP) form the PAC domain. Residues 512–521 (ITEQIYRLLL) carry the Nuclear export signal 2 motif. Disordered stretches follow at residues 531–609 (GYGS…QVKD), 661–686 (AKRK…NAIQ), 823–894 (LQDK…WSPS), 1038–1065 (TETR…PLFQ), and 1107–1126 (TTDA…MDAQ). A compositionally biased stretch (low complexity) spans 549 to 559 (SSSDSTGNNND). Composition is skewed to basic and acidic residues over residues 560-573 (DTQK…DARK) and 583-597 (TENK…EPSA). Over residues 667 to 684 (PSSSVNSSVHEQKASVNA) the composition is skewed to polar residues. The segment covering 825-836 (DKPKGRPGERGG) has biased composition (basic and acidic residues). The short motif at 851–865 (KKSGKNRKSKRIKPQ) is the Nuclear localization signal element. Positions 852–862 (KSGKNRKSKRI) are enriched in basic residues. Composition is skewed to polar residues over residues 865–875 (QESSDSTTSGT), 885–894 (GLNTTAWSPS), and 1045–1059 (SRSC…QDQA). The LXXLL motif lies at 1138 to 1142 (LDILL). Positions 1149 to 1172 (GTGSASSGSGVSAAAESLGSGSNG) are enriched in low complexity. Residues 1149–1197 (GTGSASSGSGVSAAAESLGSGSNGCDMSGSRTGSSETSHTSKYFGSIDS) form a disordered region. The segment covering 1177 to 1197 (GSRTGSSETSHTSKYFGSIDS) has biased composition (polar residues). Positions 1244–1344 (SRDLETVLKE…PLSQVNEEQT (101 aa)) are CRY binding domain.

In terms of assembly, component of the circadian clock oscillator which includes the CRY proteins, CLOCK or NPAS2, BMAL1 or BMAL2, CSNK1E, and the PER proteins. Interacts directly with PER3, and through a C-terminal domain, with CRY1 and CRY2.

The protein localises to the nucleus. The protein resides in the cytoplasm. Its function is as follows. Transcriptional repressor which forms a core component of the circadian clock. The circadian clock, an internal time-keeping system, regulates various physiological processes through the generation of approximately 24 hour circadian rhythms in gene expression, which are translated into rhythms in metabolism and behavior. It is derived from the Latin roots 'circa' (about) and 'diem' (day) and acts as an important regulator of a wide array of physiological functions including metabolism, sleep, body temperature, blood pressure, endocrine, immune, cardiovascular, and renal function. Consists of two major components: the central clock, residing in the suprachiasmatic nucleus (SCN) of the brain, and the peripheral clocks that are present in nearly every tissue and organ system. Both the central and peripheral clocks can be reset by environmental cues, also known as Zeitgebers (German for 'timegivers'). The predominant Zeitgeber for the central clock is light, which is sensed by retina and signals directly to the SCN. The central clock entrains the peripheral clocks through neuronal and hormonal signals, body temperature and feeding-related cues, aligning all clocks with the external light/dark cycle. Circadian rhythms allow an organism to achieve temporal homeostasis with its environment at the molecular level by regulating gene expression to create a peak of protein expression once every 24 hours to control when a particular physiological process is most active with respect to the solar day. Transcription and translation of core clock components (CLOCK, NPAS2, BMAL1, BMAL2, PER1, PER2, PER3, CRY1 and CRY2) plays a critical role in rhythm generation, whereas delays imposed by post-translational modifications (PTMs) are important for determining the period (tau) of the rhythms (tau refers to the period of a rhythm and is the length, in time, of one complete cycle). A diurnal rhythm is synchronized with the day/night cycle, while the ultradian and infradian rhythms have a period shorter and longer than 24 hours, respectively. Disruptions in the circadian rhythms contribute to the pathology of cardiovascular diseases, cancer, metabolic syndrome and aging. A transcription/translation feedback loop (TTFL) forms the core of the molecular circadian clock mechanism. Transcription factors, CLOCK or NPAS2 and BMAL1 or BMAL2, form the positive limb of the feedback loop, act in the form of a heterodimer and activate the transcription of core clock genes and clock-controlled genes (involved in key metabolic processes), harboring E-box elements (5'-CACGTG-3') within their promoters. The core clock genes: PER1/2/3 and CRY1/2 which are transcriptional repressors form the negative limb of the feedback loop and interact with the CLOCK|NPAS2-BMAL1|BMAL2 heterodimer inhibiting its activity and thereby negatively regulating their own expression. This heterodimer also activates nuclear receptors NR1D1/2 and RORA/B/G, which form a second feedback loop and which activate and repress BMAL1 transcription, respectively. PER1 and PER2 proteins transport CRY1 and CRY2 into the nucleus with appropriate circadian timing, but also contribute directly to repression of clock-controlled target genes through interaction with several classes of RNA-binding proteins, helicases and others transcriptional repressors. PER appears to regulate circadian control of transcription by at least three different modes. First, interacts directly with the CLOCK-BMAL1 at the tail end of the nascent transcript peak to recruit complexes containing the SIN3-HDAC that remodel chromatin to repress transcription. Second, brings H3K9 methyltransferases such as SUV39H1 and SUV39H2 to the E-box elements of the circadian target genes, like PER2 itself or PER1. The recruitment of each repressive modifier to the DNA seems to be very precisely temporally orchestrated by the large PER complex, the deacetylases acting before than the methyltransferases. Additionally, large PER complexes are also recruited to the target genes 3' termination site through interactions with RNA-binding proteins and helicases that may play a role in transcription termination to regulate transcription independently of CLOCK-BMAL1 interactions. This chain is Period circadian protein homolog 2 (PER2), found in Gallus gallus (Chicken).